The following is an 86-amino-acid chain: Elicitor peptide 5 (86 aa).

A propeptide spanning residues 1-59 (MQQERDHKRDCCKLMPQTVKAFFKCLRFRRSSSSSSDMVKARARNEEKEEPSSIETSTR) is cleaved from the precursor. The tract at residues 31-86 (SSSSSSDMVKARARNEEKEEPSSIETSTRSLNVMRKGIRKQPVSSGKRGGVNDYDM) is disordered. Residues 39-51 (VKARARNEEKEEP) are compositionally biased toward basic and acidic residues.

The protein belongs to the brassicaceae elicitor peptide family.

In terms of biological role, elicitor of plant defense. This chain is Elicitor peptide 5 (PEP5), found in Arabidopsis thaliana (Mouse-ear cress).